The sequence spans 61 residues: Large ribosomal subunit protein eL24 (61 aa).

Residues cysteine 7, cysteine 10, cysteine 33, and cysteine 37 each contribute to the Zn(2+) site. Residues 7-37 form a C4-type zinc finger; that stretch reads CSFCGHEIPPGTGLMYVRNDGTMLWFCSSKC.

The protein belongs to the eukaryotic ribosomal protein eL24 family. In terms of assembly, part of the 50S ribosomal subunit. Forms a cluster with proteins L3 and L14. It depends on Zn(2+) as a cofactor.

Its function is as follows. Binds to the 23S rRNA. This chain is Large ribosomal subunit protein eL24, found in Saccharolobus islandicus (strain M.16.27) (Sulfolobus islandicus).